The following is a 260-amino-acid chain: Putative ABC transporter ATP-binding protein PF0068 (260 aa).

An ABC transporter domain is found at 2-234 (IEVKGVWFWY…DLKRYKLEEP (233 aa)). 34-41 (GPNGSGKT) is an ATP binding site.

Belongs to the ABC transporter superfamily.

The protein localises to the cell membrane. Its function is as follows. Probably part of an ABC transporter complex. Responsible for energy coupling to the transport system. The chain is Putative ABC transporter ATP-binding protein PF0068 from Pyrococcus furiosus (strain ATCC 43587 / DSM 3638 / JCM 8422 / Vc1).